The following is a 425-amino-acid chain: Protein-glutamate methylesterase/protein-glutamine glutaminase (425 aa).

In terms of domain architecture, Response regulatory spans 22–140; sequence RVMVVDDSVV…EVAAADIFRH (119 aa). Position 73 is a 4-aspartylphosphate (Asp73). Disordered regions lie at residues 150–174 and 203–223; these read AAKRRRPATVASPPPDHDDYGSNAS and VQREQQPRSAQAARAMSRPQP. In terms of domain architecture, CheB-type methylesterase spans 221–417; the sequence is PQPTLRSFSA…PLQQIAPKLV (197 aa). Residues Ser241, His269, and Asp365 contribute to the active site.

Belongs to the CheB family. In terms of processing, phosphorylated by CheA. Phosphorylation of the N-terminal regulatory domain activates the methylesterase activity.

It is found in the cytoplasm. It catalyses the reaction [protein]-L-glutamate 5-O-methyl ester + H2O = L-glutamyl-[protein] + methanol + H(+). It carries out the reaction L-glutaminyl-[protein] + H2O = L-glutamyl-[protein] + NH4(+). Its function is as follows. Involved in chemotaxis. Part of a chemotaxis signal transduction system that modulates chemotaxis in response to various stimuli. Catalyzes the demethylation of specific methylglutamate residues introduced into the chemoreceptors (methyl-accepting chemotaxis proteins or MCP) by CheR. Also mediates the irreversible deamidation of specific glutamine residues to glutamic acid. This is Protein-glutamate methylesterase/protein-glutamine glutaminase from Nitrobacter winogradskyi (strain ATCC 25391 / DSM 10237 / CIP 104748 / NCIMB 11846 / Nb-255).